A 421-amino-acid polypeptide reads, in one-letter code: ATP-dependent RNA helicase RhlB (421 aa).

Residues 9 to 37 carry the Q motif motif; the sequence is QKFSDFALHPKVVEALEKKGFHNCTPIQA. The Helicase ATP-binding domain maps to 40–219; it reads LPLTLAGRDV…FEQMNNAEYI (180 aa). 53 to 60 is a binding site for ATP; sequence AQTGTGKT. Residues 165–168 carry the DEAD box motif; the sequence is DEAD. In terms of domain architecture, Helicase C-terminal spans 245 to 390; that stretch reads RLLQTLIEEE…VSKYNPDALM (146 aa). The segment at 395 to 421 is disordered; it reads KPLRLTRARTGNGPRRTGAPRNRRRSG. The segment covering 402–414 has biased composition (low complexity); the sequence is ARTGNGPRRTGAP.

Belongs to the DEAD box helicase family. RhlB subfamily. Component of the RNA degradosome, which is a multiprotein complex involved in RNA processing and mRNA degradation.

It is found in the cytoplasm. It carries out the reaction ATP + H2O = ADP + phosphate + H(+). Its function is as follows. DEAD-box RNA helicase involved in RNA degradation. Has RNA-dependent ATPase activity and unwinds double-stranded RNA. The protein is ATP-dependent RNA helicase RhlB of Shigella flexneri serotype 5b (strain 8401).